Here is a 373-residue protein sequence, read N- to C-terminus: 3 beta-hydroxysteroid dehydrogenase/Delta 5--&gt;4-isomerase type 3 (373 aa).

Y155 functions as the Proton acceptor in the catalytic mechanism. K159 contacts NAD(+). Residues 288 to 308 (VPILYWLAFLLETVSFLLSPI) traverse the membrane as a helical segment.

It belongs to the 3-beta-HSD family. As to expression, liver and kidney. Greater expression in liver.

The protein resides in the endoplasmic reticulum membrane. It is found in the mitochondrion membrane. The enzyme catalyses a 3beta-hydroxy-Delta(5)-steroid + NAD(+) = a 3-oxo-Delta(5)-steroid + NADH + H(+). It carries out the reaction a 3-oxo-Delta(5)-steroid = a 3-oxo-Delta(4)-steroid. It functions in the pathway lipid metabolism; steroid biosynthesis. In terms of biological role, 3-beta-HSD is a bifunctional enzyme, that catalyzes the oxidative conversion of Delta(5)-ene-3-beta-hydroxy steroid, and the oxidative conversion of ketosteroids. The 3-beta-HSD enzymatic system plays a crucial role in the biosynthesis of all classes of hormonal steroids. The sequence is that of 3 beta-hydroxysteroid dehydrogenase/Delta 5--&gt;4-isomerase type 3 (Hsd3b3) from Mus musculus (Mouse).